A 395-amino-acid chain; its full sequence is MGIKHLYQVISENAPDAVKTGEIKNHFGRKVAIDASMSIYSFLIAVRSDGQQLMSDAGETTSHLMGMFYRTLRIVDNGIKPLYVFDGAPPKLKGGELAKRSARKREAHEAHEEAKETGTAEDMEKFSRRTVRVTREHNEECKKLLKLMGVPYIDAPTEAEAQCAVLARAGKVYAAASEDMDTLCFEAPILLRHLTFSEQRKEPIQEIHLDKALEGLGMDRKQFIDLCILLGCDYLEPIPKVGPNTALKLIREHGSLEKVVEAIESDPKKKYVIPDDWPYKEARELFFNPDVRKADDPQCDFKWESPDVEGLIQFLVTEKGFSEDRVRNGAARLAKNLKSAQQSRLEGFFKPVTKTEAEKASLKRKHDEKIEEQKKRKKEEAKAKKEAKARPRGAV.

The segment at 1–104 (MGIKHLYQVI…GELAKRSARK (104 aa)) is N-domain. D34 contributes to the Mg(2+) binding site. Residues R47 and R70 each contribute to the DNA site. Residue D86 participates in Mg(2+) binding. Residues 99 to 126 (KRSARKREAHEAHEEAKETGTAEDMEKF) are disordered. Residues 122–253 (DMEKFSRRTV…NTALKLIREH (132 aa)) are I-domain. Mg(2+) contacts are provided by E158, E160, D179, and D181. E158 provides a ligand contact to DNA. DNA is bound by residues G231 and D233. D233 provides a ligand contact to Mg(2+). The interaction with PCNA stretch occupies residues 341 to 349 (QQSRLEGFF). Positions 356–389 (EAEKASLKRKHDEKIEEQKKRKKEEAKAKKEAKA) are enriched in basic and acidic residues. Residues 356–395 (EAEKASLKRKHDEKIEEQKKRKKEEAKAKKEAKARPRGAV) are disordered.

Belongs to the XPG/RAD2 endonuclease family. FEN1 subfamily. In terms of assembly, interacts with PCNA. Three molecules of fen1 bind to one PCNA trimer with each molecule binding to one PCNA monomer. PCNA stimulates the nuclease activity without altering cleavage specificity. Requires Mg(2+) as cofactor. In terms of processing, phosphorylated. Phosphorylation upon DNA damage induces relocalization to the nuclear plasma.

Its subcellular location is the nucleus. The protein resides in the nucleolus. It is found in the nucleoplasm. It localises to the mitochondrion. Functionally, structure-specific nuclease with 5'-flap endonuclease and 5'-3' exonuclease activities involved in DNA replication and repair. During DNA replication, cleaves the 5'-overhanging flap structure that is generated by displacement synthesis when DNA polymerase encounters the 5'-end of a downstream Okazaki fragment. It enters the flap from the 5'-end and then tracks to cleave the flap base, leaving a nick for ligation. Also involved in the long patch base excision repair (LP-BER) pathway, by cleaving within the apurinic/apyrimidinic (AP) site-terminated flap. Acts as a genome stabilization factor that prevents flaps from equilibrating into structures that lead to duplications and deletions. Also possesses 5'-3' exonuclease activity on nicked or gapped double-stranded DNA, and exhibits RNase H activity. Also involved in replication and repair of rDNA and in repairing mitochondrial DNA. The protein is Flap endonuclease 1 (fen1) of Talaromyces stipitatus (strain ATCC 10500 / CBS 375.48 / QM 6759 / NRRL 1006) (Penicillium stipitatum).